A 220-amino-acid polypeptide reads, in one-letter code: Thiamine-phosphate synthase (220 aa).

Residues 39–43 (QLRDK) and asparagine 80 contribute to the 4-amino-2-methyl-5-(diphosphooxymethyl)pyrimidine site. Mg(2+)-binding residues include aspartate 81 and aspartate 100. Residue serine 119 coordinates 4-amino-2-methyl-5-(diphosphooxymethyl)pyrimidine. Residue 145 to 147 (TPT) coordinates 2-[(2R,5Z)-2-carboxy-4-methylthiazol-5(2H)-ylidene]ethyl phosphate. Lysine 148 provides a ligand contact to 4-amino-2-methyl-5-(diphosphooxymethyl)pyrimidine. Glycine 176 lines the 2-[(2R,5Z)-2-carboxy-4-methylthiazol-5(2H)-ylidene]ethyl phosphate pocket.

The protein belongs to the thiamine-phosphate synthase family. Requires Mg(2+) as cofactor.

The catalysed reaction is 2-[(2R,5Z)-2-carboxy-4-methylthiazol-5(2H)-ylidene]ethyl phosphate + 4-amino-2-methyl-5-(diphosphooxymethyl)pyrimidine + 2 H(+) = thiamine phosphate + CO2 + diphosphate. It carries out the reaction 2-(2-carboxy-4-methylthiazol-5-yl)ethyl phosphate + 4-amino-2-methyl-5-(diphosphooxymethyl)pyrimidine + 2 H(+) = thiamine phosphate + CO2 + diphosphate. The enzyme catalyses 4-methyl-5-(2-phosphooxyethyl)-thiazole + 4-amino-2-methyl-5-(diphosphooxymethyl)pyrimidine + H(+) = thiamine phosphate + diphosphate. It functions in the pathway cofactor biosynthesis; thiamine diphosphate biosynthesis; thiamine phosphate from 4-amino-2-methyl-5-diphosphomethylpyrimidine and 4-methyl-5-(2-phosphoethyl)-thiazole: step 1/1. In terms of biological role, condenses 4-methyl-5-(beta-hydroxyethyl)thiazole monophosphate (THZ-P) and 2-methyl-4-amino-5-hydroxymethyl pyrimidine pyrophosphate (HMP-PP) to form thiamine monophosphate (TMP). In Mycobacterium ulcerans (strain Agy99), this protein is Thiamine-phosphate synthase.